The following is a 403-amino-acid chain: D-galactonate dehydratase family member ManD (403 aa).

N37 and H122 together coordinate substrate. Residue Y159 is the Proton donor/acceptor of the active site. Residue D211 participates in Mg(2+) binding. H213 serves as the catalytic Proton donor/acceptor. Positions 237 and 263 each coordinate Mg(2+). Positions 263, 284, 313, 317, and 340 each coordinate substrate.

The protein belongs to the mandelate racemase/muconate lactonizing enzyme family. GalD subfamily. Mg(2+) serves as cofactor.

The enzyme catalyses D-mannonate = 2-dehydro-3-deoxy-D-gluconate + H2O. It catalyses the reaction D-gluconate = 2-dehydro-3-deoxy-D-gluconate + H2O. Has low dehydratase activity with D-mannonate and D-gluconate, suggesting that these are not physiological substrates and that it has no significant role in the in vivo degradation of these compounds. Has no detectable activity with a panel of 70 other acid sugars (in vitro). This is D-galactonate dehydratase family member ManD (manD) from Chromohalobacter salexigens (strain ATCC BAA-138 / DSM 3043 / CIP 106854 / NCIMB 13768 / 1H11).